A 430-amino-acid polypeptide reads, in one-letter code: Enolase (430 aa).

(2R)-2-phosphoglycerate is bound at residue Gln163. The active-site Proton donor is the Glu205. Mg(2+) is bound by residues Asp242, Glu285, and Asp312. Residues Lys337, Arg366, Ser367, and Lys388 each coordinate (2R)-2-phosphoglycerate. The active-site Proton acceptor is Lys337.

Belongs to the enolase family. The cofactor is Mg(2+).

Its subcellular location is the cytoplasm. The protein resides in the secreted. It localises to the cell surface. The enzyme catalyses (2R)-2-phosphoglycerate = phosphoenolpyruvate + H2O. It participates in carbohydrate degradation; glycolysis; pyruvate from D-glyceraldehyde 3-phosphate: step 4/5. Its function is as follows. Catalyzes the reversible conversion of 2-phosphoglycerate (2-PG) into phosphoenolpyruvate (PEP). It is essential for the degradation of carbohydrates via glycolysis. In Maridesulfovibrio salexigens (strain ATCC 14822 / DSM 2638 / NCIMB 8403 / VKM B-1763) (Desulfovibrio salexigens), this protein is Enolase.